The chain runs to 154 residues: Cytochrome c-type biogenesis protein CcmE (154 aa).

The Cytoplasmic segment spans residues 1–8 (MTPQRKRR). Residues 9 to 29 (LVMLAALAGGVGVAVALALAA) form a helical; Signal-anchor for type II membrane protein membrane-spanning segment. At 30 to 154 (LQQNINLFYS…GGTPAAEPQP (125 aa)) the chain is on the periplasmic side. 2 residues coordinate heme: His-124 and Tyr-128. Positions 130–154 (PPEAAHALKQGAATSGGTPAAEPQP) are disordered.

Belongs to the CcmE/CycJ family.

The protein resides in the cell inner membrane. Functionally, heme chaperone required for the biogenesis of c-type cytochromes. Transiently binds heme delivered by CcmC and transfers the heme to apo-cytochromes in a process facilitated by CcmF and CcmH. In Bordetella petrii (strain ATCC BAA-461 / DSM 12804 / CCUG 43448), this protein is Cytochrome c-type biogenesis protein CcmE.